Consider the following 275-residue polypeptide: UBX domain-containing protein 8 (275 aa).

Met-1 is a topological domain (cytoplasmic). A helical transmembrane segment spans residues 2-22 (ASRGVVGIFLLSALPLLCLEL). The Lumenal segment spans residues 23–33 (RRGKPDLGIKD). The helical transmembrane segment at 34 to 54 (LILLCGRIFLLLALLTLIISV) threads the bilayer. Residues 55–275 (TTSWVNSFKP…LNVEEKEQSS (221 aa)) are Cytoplasmic-facing. A disordered region spans residues 137–181 (DEDLELDSESQTSFETSNREAAKRRNLPNSVTNISPPAEQPTKKE). The region spanning 192 to 268 (TAEEVVTVAL…GITVDTVLNV (77 aa)) is the UBX domain.

In terms of assembly, interacts with SYVN1 and VCP.

The protein localises to the endoplasmic reticulum membrane. In terms of biological role, involved in endoplasmic reticulum-associated degradation (ERAD) for misfolded lumenal proteins, possibly by tethering VCP to the endoplasmic reticulum membrane. May play a role in reproduction. May play a role in reproduction. The sequence is that of UBX domain-containing protein 8 (UBXN8) from Bos taurus (Bovine).